A 235-amino-acid chain; its full sequence is 1-(5-phosphoribosyl)-5-[(5-phosphoribosylamino)methylideneamino] imidazole-4-carboxamide isomerase (235 aa).

The active-site Proton acceptor is the aspartate 8. Aspartate 127 functions as the Proton donor in the catalytic mechanism.

It belongs to the HisA/HisF family.

Its subcellular location is the cytoplasm. The enzyme catalyses 1-(5-phospho-beta-D-ribosyl)-5-[(5-phospho-beta-D-ribosylamino)methylideneamino]imidazole-4-carboxamide = 5-[(5-phospho-1-deoxy-D-ribulos-1-ylimino)methylamino]-1-(5-phospho-beta-D-ribosyl)imidazole-4-carboxamide. Its pathway is amino-acid biosynthesis; L-histidine biosynthesis; L-histidine from 5-phospho-alpha-D-ribose 1-diphosphate: step 4/9. The chain is 1-(5-phosphoribosyl)-5-[(5-phosphoribosylamino)methylideneamino] imidazole-4-carboxamide isomerase from Aliarcobacter butzleri (strain RM4018) (Arcobacter butzleri).